Here is a 147-residue protein sequence, read N- to C-terminus: Hemoglobin subunit beta (147 aa).

Residues 3-147 (HWTAEEKQLI…VAHALARKYH (145 aa)) enclose the Globin domain. Residues H64 and H93 each contribute to the heme b site.

Belongs to the globin family. Heterotetramer of two alpha chains and two beta chains. Red blood cells.

Functionally, involved in oxygen transport from the lung to the various peripheral tissues. The protein is Hemoglobin subunit beta (HBB) of Anas platyrhynchos (Mallard).